Consider the following 422-residue polypeptide: Mitogen-activated protein kinase spm1 (422 aa).

In terms of domain architecture, Protein kinase spans 21-314 (FKVVKELGQG…VDDALEHPYL (294 aa)). ATP-binding positions include 27–35 (LGQGAYGIV) and Lys52. Residue Asp149 is the Proton acceptor of the active site. The residue at position 186 (Thr186) is a Phosphothreonine. The TXY motif lies at 186-188 (TEY). Tyr188 carries the phosphotyrosine modification. Residues 359-422 (RRRSHPTNPT…DHKSDDNRHN (64 aa)) are disordered. The segment covering 364–379 (PTNPTVNIPQPAQTVP) has biased composition (polar residues). Low complexity predominate over residues 380–397 (SNDNGSFNVSSSSSSQTS). Residues 411-422 (AIDHKSDDNRHN) are compositionally biased toward basic and acidic residues.

The protein belongs to the protein kinase superfamily. CMGC Ser/Thr protein kinase family. MAP kinase subfamily. Mg(2+) serves as cofactor. Post-translationally, dually phosphorylated on Thr-186 and Tyr-188, which activates the enzyme.

The catalysed reaction is L-seryl-[protein] + ATP = O-phospho-L-seryl-[protein] + ADP + H(+). The enzyme catalyses L-threonyl-[protein] + ATP = O-phospho-L-threonyl-[protein] + ADP + H(+). With respect to regulation, activated by tyrosine and threonine phosphorylation by skh1/pek1. Functionally, regulates cell integrity and functions coordinately with the protein kinase C pathway (pck1 and pck2). Involved the regulation of wall architecture, cell shape, cytokinesis in exponential and stationary phase, and metabolism of ions. The chain is Mitogen-activated protein kinase spm1 (spm1) from Schizosaccharomyces pombe (strain 972 / ATCC 24843) (Fission yeast).